We begin with the raw amino-acid sequence, 476 residues long: MERPNSSVAGLYSGLHGNGSVENLATEEEGLRLLAGAASARFGSSAGRGGGGGEPEGRPGPFNGIVTEPDPEEGTSSGQRGGINGQRGTKRKMENEGEDFLKELTLSLMSRRHHESVWWADLEDEFKNGEMNLLYKYTFEQLKTHWLEAWEDFELALNTFAKVALRPDTIYTIKKTVNIRKCAYVLGNGAVVRFQTCDRVAFNCAMQSLGPGLIGMSGVTFMNVRFVVEGFNGTVFASTTQLTLHGVFFQNCSGICVDSWGRVSARGCTFVACWKGVVGRNKSQMSVKKCVFERCIMAMVVEGQARIRHNAGSDNVCFLLLKGTASVKHNMICGGGHSQLLTCADGNCQALRVFHVVSHPRRPWPVFEHNMLMRCTVHLGARRGMFSPYQSNFCHTKVLMETDAFSRVWWNGVFDLTMELFKVVRYDESKVRCRPCECGANHIRLYPATLNVTEQLRTDHQMMSCLRTDYESSDED.

2 disordered regions span residues 1–20 (MERPNSSVAGLYSGLHGNGS) and 42–95 (FGSS…KMEN). Residues S472 and S473 each carry the phosphoserine modification.

This sequence belongs to the adenoviridae E1B 55 kDa protein family. In terms of assembly, interacts with host PML-4 and PML-5; this interaction promotes efficient subnuclear targeting of E1B-55K to PML nuclear bodies. Interacts with E4-ORF3 protein. Interacts with E4-ORF6 protein.

It is found in the host nucleus. It localises to the host cytoplasm. Plays a major role to prevent cellular inhibition of viral genome replication. Assembles an SCF-like E3 ubiquitin ligase complex based on the cellular proteins ELOB, ELOC, CUL5 and RBX1, in cooperation with viral E4orf6. This viral RING-type ligase ubiquitinates cellular substrates and targets them to proteasomal degradation: TP53/p53, LIG4, MRE11-RAD50-NBS1 (MRN) complex, ITGA3, DAXX and BLM. E1B-55K probably acts as the substrate-specific adapter of the SCF-like E3 ubiquitin ligase complex. Degradation of host TP53/p53 activity is essential for preventing E1A-induced TP53 accumulation that would otherwise lead to cell apoptosis and growth arrest. E1B-55K also inactivates TP53 transcription-factor activity by binding its transactivation domain. E1B-55K also functions as a SUMO1 E3 ligase for TP53 which causes the latter to be sequestered in promyelocytic leukemia (PML) nuclear bodies thereby contributing to maximal inhibition of TP53 function. The polypeptide is E1B 55 kDa protein (Human adenovirus F serotype 40 (HAdV-40)).